The sequence spans 467 residues: Protein PHOSPHATE STARVATION RESPONSE 3 (467 aa).

The tract at residues 227–266 is disordered; the sequence is MSLPVSSCSDQEDLQDARSPAKVQLSSSRSSSGTASCNKP. One can recognise an HTH myb-type domain in the interval 262-322; the sequence is SCNKPRLRWT…HLQKYRLAKY (61 aa). Residues 293 to 318 constitute a DNA-binding region (H-T-H motif); sequence PKGVLKLMKVEGLTIYHIKSHLQKYR. The span at 327 to 337 shows a compositional bias: basic and acidic residues; it reads KEDKKQEEKKT. 2 disordered regions span residues 327-353 and 400-467; these read KEDK…KSAQ and RESI…VHDE. Residues 402 to 412 show a composition bias toward polar residues; it reads SISSMTSTTEG. 2 stretches are compositionally biased toward basic and acidic residues: residues 419–428 and 438–467; these read PMEKTEDKAE and RITD…VHDE.

Expressed in the root cap and in the exodermis of the root, in the root tip of lateral roots, in the mesophyll cells of the leaf, in pollen, vascular cylinder of the anther and the veins of the lemma, palea and pistils, and in the xylem and phloem regions of large vascular bundles, small vascular bundles and diffuse vascular bundles in node I.

The protein resides in the nucleus. Transcription factor involved in phosphate starvation signaling. Binds to P1BS, an imperfect palindromic sequence 5'-GNATATNC-3', to promote the expression of inorganic phosphate (Pi) starvation-responsive genes. Functionally redundant with PHR1 and PHR2 in regulating Pi starvation response and Pi homeostasis. This is Protein PHOSPHATE STARVATION RESPONSE 3 from Oryza sativa subsp. japonica (Rice).